Reading from the N-terminus, the 103-residue chain is Large ribosomal subunit protein bL21 (103 aa).

This sequence belongs to the bacterial ribosomal protein bL21 family. In terms of assembly, part of the 50S ribosomal subunit. Contacts protein L20.

In terms of biological role, this protein binds to 23S rRNA in the presence of protein L20. This chain is Large ribosomal subunit protein bL21, found in Mycobacterium sp. (strain JLS).